The sequence spans 223 residues: MVTLSSPSPSLSCVENVTCKSSHVSRVLISGTDNINHGESSEAKILRDVHISERLLEDFTELARENTEKDLETCGTLAAFLERGIFYVTTLIIPKQESTSNSCQAMNEVEVFSIQNERELYPVGWIHTHPSQGCFMSSVDLHTHYSYQVMVPEAFAIVVAPTDSSKSYGIFKLTDPGGMEVLRGCSETGFHPHKEPEDGNPVYEHCSNVYKNSNLRFEIFDLR.

One can recognise an MPN domain in the interval 49–177 (VHISERLLED…YGIFKLTDPG (129 aa)). Residues histidine 127, histidine 129, aspartate 140, histidine 142, cysteine 185, histidine 191, and histidine 193 each contribute to the Zn(2+) site. The JAMM motif motif lies at 127–140 (HTHPSQGCFMSSVD).

Belongs to the peptidase M67C family. Zn(2+) serves as cofactor.

Zinc metalloprotease that cleaves 'Lys-48'- and 'Lys-63'-linked polyubiquitin chains. The protein is AMSH-like ubiquitin thioesterase 2 (AMSH2) of Arabidopsis thaliana (Mouse-ear cress).